The chain runs to 388 residues: Succinyl-diaminopimelate desuccinylase (388 aa).

His-84 contributes to the Zn(2+) binding site. Asp-86 is a catalytic residue. Asp-115 lines the Zn(2+) pocket. Glu-146 functions as the Proton acceptor in the catalytic mechanism. Zn(2+) contacts are provided by Glu-147, Glu-175, and His-360.

It belongs to the peptidase M20A family. DapE subfamily. Homodimer. Requires Zn(2+) as cofactor. It depends on Co(2+) as a cofactor.

It carries out the reaction N-succinyl-(2S,6S)-2,6-diaminopimelate + H2O = (2S,6S)-2,6-diaminopimelate + succinate. It participates in amino-acid biosynthesis; L-lysine biosynthesis via DAP pathway; LL-2,6-diaminopimelate from (S)-tetrahydrodipicolinate (succinylase route): step 3/3. In terms of biological role, catalyzes the hydrolysis of N-succinyl-L,L-diaminopimelic acid (SDAP), forming succinate and LL-2,6-diaminopimelate (DAP), an intermediate involved in the bacterial biosynthesis of lysine and meso-diaminopimelic acid, an essential component of bacterial cell walls. This Helicobacter pylori (strain J99 / ATCC 700824) (Campylobacter pylori J99) protein is Succinyl-diaminopimelate desuccinylase.